The following is a 144-amino-acid chain: Transmembrane protein 170A (144 aa).

Topologically, residues Met1–Val50 are extracellular. N-linked (GlcNAc...) asparagine glycosylation is found at Asn30 and Asn36. Residues Phe51 to Phe71 form a helical membrane-spanning segment. Topologically, residues Thr72 to Ser85 are cytoplasmic. The chain crosses the membrane as a helical span at residues Ile86 to Ala106. Over Gly107 to Met116 the chain is Extracellular. The chain crosses the membrane as a helical span at residues Ile117–Phe137. Over Leu138–Leu144 the chain is Cytoplasmic.

It belongs to the TMEM170 family. As to quaternary structure, interacts with RTN4.

Its subcellular location is the endoplasmic reticulum membrane. It is found in the nucleus envelope. Its function is as follows. Acts as a regulator of endoplasmic reticulum (ER) and nuclear envelope (NE) morphogenesis. Affects the ratio between tubular ER and ER sheets by promoting sheet formation at the expense of tubules. Influences NE expansion, nuclear pore complex formation and proper localization of inner nuclear membrane proteins. This chain is Transmembrane protein 170A (Tmem170a), found in Mus musculus (Mouse).